The chain runs to 518 residues: Bifunctional methyltransferase (518 aa).

Positions 1–300 are hemK; the sequence is MQYSIKQILS…SHNRVIEISP (300 aa). Positions 1–302 are RF MTase; it reads MQYSIKQILS…NRVIEISPIN (302 aa). Residues 140 to 144, Asp-163, Trp-192, Asn-207, Glu-347, Glu-372, Asn-399, and Asp-421 contribute to the S-adenosyl-L-methionine site; that span reads GTGSG. 207–210 serves as a coordination point for substrate; that stretch reads NPPY. The segment at 301-518 is tRNA (guanine-N(7)-)-methyltransferase; sequence INLNRSYARR…MILQHALTDH (218 aa). The tRNA MTase stretch occupies residues 305–518; sequence RSYARRIGKS…MILQHALTDH (214 aa). Asp-421 is a catalytic residue. Substrate-binding residues include Lys-425 and Asp-457.

The protein in the C-terminal section; belongs to the class I-like SAM-binding methyltransferase superfamily. TrmB family. This sequence in the N-terminal section; belongs to the protein N5-glutamine methyltransferase family. PrmC subfamily.

The catalysed reaction is L-glutaminyl-[peptide chain release factor] + S-adenosyl-L-methionine = N(5)-methyl-L-glutaminyl-[peptide chain release factor] + S-adenosyl-L-homocysteine + H(+). It carries out the reaction guanosine(46) in tRNA + S-adenosyl-L-methionine = N(7)-methylguanosine(46) in tRNA + S-adenosyl-L-homocysteine. Functionally, methylates the class 1 translation termination release factors RF1/PrfA and RF2/PrfB on the glutamine residue of the universally conserved GGQ motif. Its function is as follows. Catalyzes the formation of N(7)-methylguanine at position 46 (m7G46) in tRNA. The polypeptide is Bifunctional methyltransferase (prmC/trmB) (Rickettsia prowazekii (strain Madrid E)).